A 252-amino-acid chain; its full sequence is C-type lectin domain family 2 member D3 (252 aa).

Positions 1–58 (MSSSAHLQDAPPLLSGTLTQNEGQTSLRQSSSCGPSAASASESLSGYTESRIPHSKVR) are disordered. Topologically, residues 1 to 78 (MSSSAHLQDA…ESRVKRYCCY (78 aa)) are cytoplasmic. Residues 16–29 (GTLTQNEGQTSLRQ) show a composition bias toward polar residues. The span at 30-43 (SSSCGPSAASASES) shows a compositional bias: low complexity. The helical; Signal-anchor for type II membrane protein transmembrane segment at 79-99 (GGVITVVAIAIVVPLSVTLSV) threads the bilayer. Residues 100–252 (KQMEQTSINN…KPKKYISQSQ (153 aa)) are Extracellular-facing. Positions 137–242 (YGNKCFYFSE…VYVERPWICS (106 aa)) constitute a C-type lectin domain. N-linked (GlcNAc...) asparagine glycosylation is present at Asn150. Residues Cys158 and Cys241 are joined by a disulfide bond.

It localises to the cell membrane. Lectin-type cell surface receptor. The sequence is that of C-type lectin domain family 2 member D3 (Clec2d3) from Rattus norvegicus (Rat).